Consider the following 213-residue polypeptide: Orotate phosphoribosyltransferase (213 aa).

5-phospho-alpha-D-ribose 1-diphosphate is bound at residue Lys26. 34–35 provides a ligand contact to orotate; sequence FF. Residues 72–73, Arg99, Lys100, Lys103, His105, and 124–132 each bind 5-phospho-alpha-D-ribose 1-diphosphate; these read YK and DDVITAGTA. Thr128 and Arg156 together coordinate orotate.

It belongs to the purine/pyrimidine phosphoribosyltransferase family. PyrE subfamily. In terms of assembly, homodimer. Requires Mg(2+) as cofactor.

It carries out the reaction orotidine 5'-phosphate + diphosphate = orotate + 5-phospho-alpha-D-ribose 1-diphosphate. The protein operates within pyrimidine metabolism; UMP biosynthesis via de novo pathway; UMP from orotate: step 1/2. Functionally, catalyzes the transfer of a ribosyl phosphate group from 5-phosphoribose 1-diphosphate to orotate, leading to the formation of orotidine monophosphate (OMP). This is Orotate phosphoribosyltransferase from Actinobacillus pleuropneumoniae serotype 5b (strain L20).